Here is a 227-residue protein sequence, read N- to C-terminus: Lipoprotein-releasing system ATP-binding protein LolD (227 aa).

One can recognise an ABC transporter domain in the interval 7-227; it reads LSCRNLGKSY…RLEGGRLVEA (221 aa). Residue 43–50 coordinates ATP; sequence GTSGSGKS.

It belongs to the ABC transporter superfamily. Lipoprotein translocase (TC 3.A.1.125) family. In terms of assembly, the complex is composed of two ATP-binding proteins (LolD) and two transmembrane proteins (LolC and LolE).

The protein resides in the cell inner membrane. Functionally, part of the ABC transporter complex LolCDE involved in the translocation of mature outer membrane-directed lipoproteins, from the inner membrane to the periplasmic chaperone, LolA. Responsible for the formation of the LolA-lipoprotein complex in an ATP-dependent manner. In Pseudomonas syringae pv. tomato (strain ATCC BAA-871 / DC3000), this protein is Lipoprotein-releasing system ATP-binding protein LolD.